The chain runs to 108 residues: MSHGPNLTTFDEGRLMQVLVAPIVSEKATMIAEKSNAVTFKVLQDATKYEIKAAVQLMFKVEVKGVSVVNTKGKTKRFGKSVGRRDNIRKAYVTLKPGQELNLGGEAA.

Belongs to the universal ribosomal protein uL23 family. As to quaternary structure, part of the 50S ribosomal subunit. Contacts protein L29, and trigger factor when it is bound to the ribosome.

Functionally, one of the early assembly proteins it binds 23S rRNA. One of the proteins that surrounds the polypeptide exit tunnel on the outside of the ribosome. Forms the main docking site for trigger factor binding to the ribosome. This is Large ribosomal subunit protein uL23 from Albidiferax ferrireducens (strain ATCC BAA-621 / DSM 15236 / T118) (Rhodoferax ferrireducens).